The primary structure comprises 131 residues: Small ribosomal subunit protein uS8 (131 aa).

This sequence belongs to the universal ribosomal protein uS8 family. Part of the 30S ribosomal subunit. Contacts proteins S5 and S12.

In terms of biological role, one of the primary rRNA binding proteins, it binds directly to 16S rRNA central domain where it helps coordinate assembly of the platform of the 30S subunit. This chain is Small ribosomal subunit protein uS8, found in Erythrobacter litoralis (strain HTCC2594).